The chain runs to 179 residues: uncharacterized protein (179 aa).

This is an uncharacterized protein from Acanthamoeba polyphaga mimivirus (APMV).